Here is a 388-residue protein sequence, read N- to C-terminus: Chorismate synthase (388 aa).

NADP(+) contacts are provided by Arg39 and Arg45. Positions 95-118 (EKNEKSRRVSRPRPGHADLVGGMK) are disordered. Residues 130–132 (RSS), 251–252 (NA), Gly296, 311–315 (KPIPT), and Arg337 contribute to the FMN site.

Belongs to the chorismate synthase family. Homotetramer. The cofactor is FMNH2.

It catalyses the reaction 5-O-(1-carboxyvinyl)-3-phosphoshikimate = chorismate + phosphate. The protein operates within metabolic intermediate biosynthesis; chorismate biosynthesis; chorismate from D-erythrose 4-phosphate and phosphoenolpyruvate: step 7/7. Catalyzes the anti-1,4-elimination of the C-3 phosphate and the C-6 proR hydrogen from 5-enolpyruvylshikimate-3-phosphate (EPSP) to yield chorismate, which is the branch point compound that serves as the starting substrate for the three terminal pathways of aromatic amino acid biosynthesis. This reaction introduces a second double bond into the aromatic ring system. In Listeria monocytogenes serovar 1/2a (strain ATCC BAA-679 / EGD-e), this protein is Chorismate synthase.